The primary structure comprises 202 residues: Matrix protein (202 aa).

The PPXY motif motif lies at 35-38 (PPEY). Residues 115–151 (KIRRTLVFQWAESRGPLDGEELEYSQEITWDDDSEFI) are essential for glycoprotein binding.

The protein belongs to the lyssavirus matrix protein family. As to quaternary structure, homomultimer. Interacts with nucleoprotein and with the cytoplasmic domain of glycoprotein.

Its subcellular location is the virion membrane. The protein localises to the host endomembrane system. Functionally, plays a major role in assembly and budding of virion. Completely covers the ribonucleoprotein coil and keep it in condensed bullet-shaped form. Inhibits viral transcription and stimulates replication. Plays a major role in early induction of TRAIL-mediated apoptosis in infected neurons. The chain is Matrix protein (M) from Aravan virus (ARAV).